Consider the following 1238-residue polypeptide: MRAQGRGRLPRRLLLLLALWVQAARPMGYFELQLSALRNVNGELLSGACCDGDGRTTRAGGCGHDECDTYVRVCLKEYQAKVTPTGPCSYGHGATPVLGGNSFYLPPAGAAGDRARARARAGGDQDPGLVVIPFQFAWPRSFTLIVEAWDWDNDTTPNEELLIERVSHAGMINPEDRWKSLHFSGHVAHLELQIRVRCDENYYSATCNKFCRPRNDFFGHYTCDQYGNKACMDGWMGKECKEAVCKQGCNLLHGGCTVPGECRCSYGWQGRFCDECVPYPGCVHGSCVEPWQCNCETNWGGLLCDKDLNYCGSHHPCTNGGTCINAEPDQYRCTCPDGYSGRNCEKAEHACTSNPCANGGSCHEVPSGFECHCPSGWSGPTCALDIDECASNPCAAGGTCVDQVDGFECICPEQWVGATCQLDANECEGKPCLNAFSCKNLIGGYYCDCIPGWKGINCHINVNDCRGQCQHGGTCKDLVNGYQCVCPRGFGGRHCELERDECASSPCHSGGLCEDLADGFHCHCPQGFSGPLCEVDVDLCEPSPCRNGARCYNLEGDYYCACPDDFGGKNCSVPREPCPGGACRVIDGCGSDAGPGMPGTAASGVCGPHGRCVSQPGGNFSCICDSGFTGTYCHENIDDCLGQPCRNGGTCIDEVDAFRCFCPSGWEGELCDTNPNDCLPDPCHSRGRCYDLVNDFYCACDDGWKGKTCHSREFQCDAYTCSNGGTCYDSGDTFRCACPPGWKGSTCAVAKNSSCLPNPCVNGGTCVGSGASFSCICRDGWEGRTCTHNTNDCNPLPCYNGGICVDGVNWFRCECAPGFAGPDCRINIDECQSSPCAYGATCVDEINGYRCSCPPGRAGPRCQEVIGFGRSCWSRGTPFPHGSSWVEDCNSCRCLDGRRDCSKVWCGWKPCLLAGQPEALSAQCPLGQRCLEKAPGQCLRPPCEAWGECGAEEPPSTPCLPRSGHLDNNCARLTLHFNRDHVPQGTTVGAICSGIRSLPATRAVARDRLLVLLCDRASSGASAVEVAVSFSPARDLPDSSLIQGAAHAIVAAITQRGNSSLLLAVTEVKVETVVTGGSSTGLLVPVLCGAFSVLWLACVVLCVWWTRKRRKERERSRLPREESANNQWAPLNPIRNPIERPGGHKDVLYQCKNFTPPPRRADEALPGPAGHAAVREDEEDEDLGRGEEDSLEAEKFLSHKFTKDPGRSPGRPAHWASGPKVDNRAVRSINEARYAGKE.

An N-terminal signal peptide occupies residues 1–23 (MRAQGRGRLPRRLLLLLALWVQA). The Extracellular portion of the chain corresponds to 27-1080 (MGYFELQLSA…ETVVTGGSST (1054 aa)). Asparagine 153 carries N-linked (GlcNAc...) asparagine glycosylation. Positions 196 to 240 (VRCDENYYSATCNKFCRPRNDFFGHYTCDQYGNKACMDGWMGKEC) constitute a DSL domain. Cystine bridges form between cysteine 198/cysteine 207, cysteine 211/cysteine 223, cysteine 231/cysteine 240, cysteine 245/cysteine 256, cysteine 249/cysteine 262, cysteine 264/cysteine 273, cysteine 276/cysteine 287, cysteine 282/cysteine 293, cysteine 295/cysteine 304, cysteine 311/cysteine 323, cysteine 317/cysteine 333, cysteine 335/cysteine 344, cysteine 351/cysteine 362, cysteine 356/cysteine 371, cysteine 373/cysteine 382, cysteine 389/cysteine 400, cysteine 394/cysteine 409, cysteine 411/cysteine 420, cysteine 427/cysteine 438, cysteine 432/cysteine 447, cysteine 449/cysteine 458, cysteine 465/cysteine 475, cysteine 469/cysteine 484, cysteine 486/cysteine 495, cysteine 502/cysteine 513, cysteine 507/cysteine 522, cysteine 524/cysteine 533, cysteine 540/cysteine 551, cysteine 545/cysteine 560, cysteine 562/cysteine 571, cysteine 589/cysteine 612, cysteine 606/cysteine 622, cysteine 624/cysteine 633, cysteine 640/cysteine 651, cysteine 645/cysteine 660, cysteine 662/cysteine 671, cysteine 678/cysteine 689, cysteine 683/cysteine 698, cysteine 700/cysteine 709, cysteine 716/cysteine 727, cysteine 721/cysteine 736, and cysteine 738/cysteine 747. The EGF-like 1 domain occupies 241–274 (KEAVCKQGCNLLHGGCTVPGECRCSYGWQGRFCD). One can recognise an EGF-like 2; atypical domain in the interval 275-305 (ECVPYPGCVHGSCVEPWQCNCETNWGGLLCD). EGF-like domains lie at 307 to 345 (DLNY…RNCE) and 347 to 383 (AEHA…PTCA). The region spanning 385 to 421 (DIDECASNPCAAGGTCVDQVDGFECICPEQWVGATCQ) is the EGF-like 5; calcium-binding domain. The region spanning 423–459 (DANECEGKPCLNAFSCKNLIGGYYCDCIPGWKGINCH) is the EGF-like 6; calcium-binding domain. The region spanning 461–496 (NVNDCRGQCQHGGTCKDLVNGYQCVCPRGFGGRHCE) is the EGF-like 7; calcium-binding domain. EGF-like domains follow at residues 498–534 (ERDE…PLCE) and 536–572 (DVDL…KNCS). N-linked (GlcNAc...) asparagine glycosylation is present at asparagine 570. Residues 574-634 (PREPCPGGAC…DSGFTGTYCH (61 aa)) form the EGF-like 10; atypical domain. Asparagine 619 carries N-linked (GlcNAc...) asparagine glycosylation. Residues 636-672 (NIDDCLGQPCRNGGTCIDEVDAFRCFCPSGWEGELCD) form the EGF-like 11; calcium-binding domain. One can recognise an EGF-like 12; calcium-binding domain in the interval 674–710 (NPNDCLPDPCHSRGRCYDLVNDFYCACDDGWKGKTCH). EGF-like domains lie at 712 to 748 (REFQ…STCA) and 751 to 787 (KNSS…RTCT). A glycan (N-linked (GlcNAc...) asparagine) is linked at asparagine 752. Intrachain disulfides connect cysteine 755–cysteine 766, cysteine 760–cysteine 775, cysteine 777–cysteine 786, cysteine 793–cysteine 804, cysteine 798–cysteine 813, cysteine 815–cysteine 824, cysteine 831–cysteine 842, cysteine 836–cysteine 851, and cysteine 853–cysteine 862. One can recognise an EGF-like 15; calcium-binding domain in the interval 789 to 825 (NTNDCNPLPCYNGGICVDGVNWFRCECAPGFAGPDCR). In terms of domain architecture, EGF-like 16; calcium-binding spans 827–863 (NIDECQSSPCAYGATCVDEINGYRCSCPPGRAGPRCQ). In terms of domain architecture, VWFC spans 870-944 (RSCWSRGTPF…PGQCLRPPCE (75 aa)). The N-linked (GlcNAc...) asparagine glycan is linked to asparagine 1058. The chain crosses the membrane as a helical span at residues 1081–1101 (GLLVPVLCGAFSVLWLACVVL). Residues 1102–1238 (CVWWTRKRRK…INEARYAGKE (137 aa)) are Cytoplasmic-facing. Composition is skewed to basic and acidic residues over residues 1114 to 1123 (ERSRLPREES) and 1183 to 1206 (LGRG…KDPG). Disordered stretches follow at residues 1114 to 1139 (ERSR…NPIE) and 1156 to 1238 (PPPR…AGKE). Serine 1123 bears the Phosphoserine mark.

Expressed in heart, placenta and skeletal muscle and to a lesser extent in pancreas. Very low expression in brain, lung, liver and kidney.

Its subcellular location is the membrane. Functionally, putative Notch ligand involved in the mediation of Notch signaling. Involved in limb development. The sequence is that of Protein jagged-2 (JAG2) from Homo sapiens (Human).